The following is a 288-amino-acid chain: RanBP2-type zinc finger protein At1g67325 (288 aa).

Positions 1 to 11 (MSQVDNRNSSA) are enriched in polar residues. 5 disordered regions span residues 1–24 (MSQVDNRNSSAAKRARTDGGRRED), 52–77 (PADHNGKSAPKPMQHQQGFSSPGAYL), 176–198 (MPRPRFYPDEKSQKRDSTRDNDW), 222–248 (PKPGSQQGGSSDKISKQNAPEGSWKCD), and 265–288 (NCGADKPGDRSNGSPSRAPEENDQ). Basic and acidic residues predominate over residues 15-24 (ARTDGGRRED). 3 consecutive RanBP2-type zinc fingers follow at residues 22–53 (REDDWICPSCGNVNFSFRTTCNMRNCTQPRPA), 194–225 (RDNDWTCPNCGNVNFSFRTVCNMRKCNTPKPG), and 241–272 (PEGSWKCDNCGNINYPFRSKCNRQNCGADKPG). Residues 181–197 (FYPDEKSQKRDSTRDND) show a composition bias toward basic and acidic residues. The segment covering 223-241 (KPGSQQGGSSDKISKQNAP) has biased composition (polar residues). Serine 278 is subject to Phosphoserine.

The chain is RanBP2-type zinc finger protein At1g67325 from Arabidopsis thaliana (Mouse-ear cress).